The following is a 286-amino-acid chain: Protein HEAT-STRESS-ASSOCIATED 32 (286 aa).

Belongs to the phosphosulfolactate synthase family.

In terms of biological role, transactivator required, together with HSP101, for long-term acquired thermotolerance (LAT) maintenance, probably by regulating heat-inducible genes expression, thus being a cellular component of thermomemory. This chain is Protein HEAT-STRESS-ASSOCIATED 32, found in Arabidopsis thaliana (Mouse-ear cress).